Reading from the N-terminus, the 140-residue chain is Large ribosomal subunit protein uL16 (140 aa).

The protein belongs to the universal ribosomal protein uL16 family. As to quaternary structure, part of the 50S ribosomal subunit.

Functionally, binds 23S rRNA and is also seen to make contacts with the A and possibly P site tRNAs. The protein is Large ribosomal subunit protein uL16 of Cytophaga hutchinsonii (strain ATCC 33406 / DSM 1761 / CIP 103989 / NBRC 15051 / NCIMB 9469 / D465).